A 263-amino-acid chain; its full sequence is 5'-nucleotidase SurE (263 aa).

Residues D8, D9, S43, and N96 each coordinate a divalent metal cation.

This sequence belongs to the SurE nucleotidase family. The cofactor is a divalent metal cation.

The protein resides in the cytoplasm. The enzyme catalyses a ribonucleoside 5'-phosphate + H2O = a ribonucleoside + phosphate. Nucleotidase that shows phosphatase activity on nucleoside 5'-monophosphates. The protein is 5'-nucleotidase SurE of Jannaschia sp. (strain CCS1).